A 198-amino-acid polypeptide reads, in one-letter code: Phosphoheptose isomerase (198 aa).

Positions 36-198 constitute an SIS domain; the sequence is MARALGADRK…DRTLFGGPGG (163 aa). 51–53 contacts substrate; that stretch reads NGG. Positions 60 and 64 each coordinate Zn(2+). Substrate contacts are provided by residues E64, 93 to 94, 119 to 121, S124, and Q174; these read ND and STS. Zn(2+) is bound by residues Q174 and H182.

This sequence belongs to the SIS family. GmhA subfamily. As to quaternary structure, homotetramer. Requires Zn(2+) as cofactor.

The protein localises to the cytoplasm. It carries out the reaction 2 D-sedoheptulose 7-phosphate = D-glycero-alpha-D-manno-heptose 7-phosphate + D-glycero-beta-D-manno-heptose 7-phosphate. Its pathway is carbohydrate biosynthesis; D-glycero-D-manno-heptose 7-phosphate biosynthesis; D-glycero-alpha-D-manno-heptose 7-phosphate and D-glycero-beta-D-manno-heptose 7-phosphate from sedoheptulose 7-phosphate: step 1/1. Catalyzes the isomerization of sedoheptulose 7-phosphate in D-glycero-D-manno-heptose 7-phosphate. The chain is Phosphoheptose isomerase from Halorhodospira halophila (strain DSM 244 / SL1) (Ectothiorhodospira halophila (strain DSM 244 / SL1)).